The primary structure comprises 481 residues: Glutamate--tRNA ligase (481 aa).

Residues 9-19 (PSPTGNLHIGT) carry the 'HIGH' region motif. Residues 247–251 (KLSKR) carry the 'KMSKS' region motif. Lys250 contacts ATP.

The protein belongs to the class-I aminoacyl-tRNA synthetase family. Glutamate--tRNA ligase type 1 subfamily. As to quaternary structure, monomer.

It is found in the cytoplasm. It catalyses the reaction tRNA(Glu) + L-glutamate + ATP = L-glutamyl-tRNA(Glu) + AMP + diphosphate. Catalyzes the attachment of glutamate to tRNA(Glu) in a two-step reaction: glutamate is first activated by ATP to form Glu-AMP and then transferred to the acceptor end of tRNA(Glu). The protein is Glutamate--tRNA ligase of Nostoc punctiforme (strain ATCC 29133 / PCC 73102).